The chain runs to 100 residues: Small ribosomal subunit protein uS14 (100 aa).

This sequence belongs to the universal ribosomal protein uS14 family. In terms of assembly, part of the 30S ribosomal subunit. Contacts proteins S3 and S10.

Functionally, binds 16S rRNA, required for the assembly of 30S particles and may also be responsible for determining the conformation of the 16S rRNA at the A site. In Prochlorococcus marinus (strain NATL2A), this protein is Small ribosomal subunit protein uS14.